Here is a 231-residue protein sequence, read N- to C-terminus: Aldehyde decarbonylase (231 aa).

Fe cation is bound by residues Glu32, Glu60, His63, Glu115, and His147.

Belongs to the aldehyde decarbonylase family. Binds 2 metal cations per subunit. The catalytic dinuclear metal-binding site could be either a di-iron or a manganese-iron cofactor. is required as a cofactor.

It carries out the reaction a long-chain fatty aldehyde + 2 NADPH + O2 + H(+) = a long-chain alkane + formate + 2 NADP(+) + H2O. Its function is as follows. Catalyzes the decarbonylation of fatty aldehydes to alkanes. Requires the presence of ferredoxin, ferredoxin reductase and NADPH for in vitro decarbonylase activity. Involved in the biosynthesis of alkanes, mainly heptadecane and pentadecane. The polypeptide is Aldehyde decarbonylase (Synechocystis sp. (strain ATCC 27184 / PCC 6803 / Kazusa)).